A 334-amino-acid polypeptide reads, in one-letter code: Mucin-15 (334 aa).

The N-terminal stretch at 1–23 is a signal peptide; that stretch reads MLALAKILLISTLFYSLLSGSHG. Residues 24-236 lie on the Extracellular side of the membrane; sequence KENQDINTTQ…SDPQKENRNT (213 aa). Residues Asn-30, Asn-61, Asn-79, Asn-90, Asn-148, Asn-155, Asn-163, Asn-218, and Asn-225 are each glycosylated (N-linked (GlcNAc...) asparagine). The interval 64–104 is disordered; that stretch reads TSNLKASHSPPLNLPNNSHGITDFSSNSSAEHSLGSLKPTS. Positions 77 to 94 are enriched in polar residues; it reads LPNNSHGITDFSSNSSAE. The helical transmembrane segment at 237-257 threads the bilayer; it reads GIVFGAILGAILGVSLLTLVG. The Cytoplasmic segment spans residues 258 to 334; that stretch reads YLLCGKRKTD…DDIPPLRTSV (77 aa). The tract at residues 304 to 334 is disordered; that stretch reads PTLNDSAMPESEENARDGIPMDDIPPLRTSV.

Post-translationally, highly glycosylated (N- and O-linked carbohydrates). Expressed in spleen, thymus, prostate, testis, ovary, small intestine, colon, peripheral blood leukocyte, bone marrow, lymph node and lung.

The protein resides in the cell membrane. Its subcellular location is the secreted. In terms of biological role, may play a role in the cell adhesion to the extracellular matrix. This Homo sapiens (Human) protein is Mucin-15 (MUC15).